Here is a 242-residue protein sequence, read N- to C-terminus: MAQVSMRDMLQAGVHFGHQTRYWNPKMKPFIYGPRNGVHIINLEKTVPMFNGALAELTRIASNNGKILFVGTKRAATEAVQAAALDCQQYYVNHRWLGGMLTNWKTVRQSIKRLKDLETQSQDGTFDKLTKKEALVRTREMEKLELSLGGIKDMAGLPDAIFVIGADYEHIAIKEANNLGIPVFAVVDTNSNPDGIDFVIPGNDDATRAIQLYVTAAAAAVKEGRSQQTATEEKFAEEVAAE.

The protein belongs to the universal ribosomal protein uS2 family.

In Mannheimia succiniciproducens (strain KCTC 0769BP / MBEL55E), this protein is Small ribosomal subunit protein uS2.